Consider the following 490-residue polypeptide: V-type proton ATPase subunit B (490 aa).

Arg380 is an ATP binding site.

It belongs to the ATPase alpha/beta chains family. V-ATPase is a heteromultimeric enzyme made up of two complexes: the ATP-hydrolytic V1 complex and the proton translocation V0 complex. The V1 complex consists of three catalytic AB heterodimers that form a heterohexamer, three peripheral stalks each consisting of EG heterodimers, one central rotor including subunits D and F, and the regulatory subunits C and H. The proton translocation complex V0 consists of the proton transport subunit a, a ring of proteolipid subunits c9c'', rotary subunit d, subunits e and f, and the accessory subunits VhaAC45 and ATP6AP2. In terms of tissue distribution, expressed in Malpighian tubules, rectum, antennal palps and oviduct.

In terms of biological role, non-catalytic subunit of the V1 complex of vacuolar(H+)-ATPase (V-ATPase), a multisubunit enzyme composed of a peripheral complex (V1) that hydrolyzes ATP and a membrane integral complex (V0) that translocates protons. V-ATPase is responsible for acidifying and maintaining the pH of intracellular compartments and in some cell types, is targeted to the plasma membrane, where it is responsible for acidifying the extracellular environment. Essential for the proper assembly and activity of V-ATPase. The polypeptide is V-type proton ATPase subunit B (Vha55) (Drosophila melanogaster (Fruit fly)).